The chain runs to 289 residues: Pantothenate synthetase (289 aa).

An ATP-binding site is contributed by Met30–His37. Residue His37 is the Proton donor of the active site. (R)-pantoate is bound at residue Gln61. Gln61 is a beta-alanine binding site. Residue Gly147–Asp150 participates in ATP binding. Gln153 contributes to the (R)-pantoate binding site. Residues Val176 and Cys184–Arg187 contribute to the ATP site.

Belongs to the pantothenate synthetase family. Homodimer.

The protein resides in the cytoplasm. The catalysed reaction is (R)-pantoate + beta-alanine + ATP = (R)-pantothenate + AMP + diphosphate + H(+). The protein operates within cofactor biosynthesis; (R)-pantothenate biosynthesis; (R)-pantothenate from (R)-pantoate and beta-alanine: step 1/1. Catalyzes the condensation of pantoate with beta-alanine in an ATP-dependent reaction via a pantoyl-adenylate intermediate. The sequence is that of Pantothenate synthetase from Allorhizobium ampelinum (strain ATCC BAA-846 / DSM 112012 / S4) (Agrobacterium vitis (strain S4)).